The primary structure comprises 491 residues: Cytochrome P450 81F2 (491 aa).

The helical transmembrane segment at 283–303 threads the bilayer; that stretch reads VIIKGLMLSMMLAGTDTAAVT. Heme is bound at residue cysteine 429.

This sequence belongs to the cytochrome P450 family. Requires heme as cofactor.

The protein localises to the membrane. Its pathway is secondary metabolite biosynthesis. Involved in indole glucosinolate biosynthesis. Catalyzes hydroxylation reactions of the glucosinolate indole ring. Converts indol-3-yl-methylglucosinolate (I3M) to 4-hydroxy-indol-3-yl-methylglucosinolate (4OH-I3M) and/or 1-hydroxy-indol-3-yl-methylglucosinolate (1OH-I3M) intermediates. These hydroxy intermediates are converted to 4-methoxy-indol-3-yl-methylglucosinolate (4MO-I3M) and 1-methoxy-indol-3-yl-methylglucosinolate (1MO-I3M) by indole glucosinolate methyltransferase 1 and 2 (IGMT1 and IGMT2). Contributes to defense against the green peach aphid (Myzus persicae), a generalist phloem-feeding herbivore. Required for the biosynthesis of antifungal indole glucosinolate metabolites. Required for the pathogen-induced accumulation of 4MO-I3M, which in turn is activated by the atypical BGLU26/PEN2 myrosinase. Required for the biosynthesis of Trp-derived antifungal compounds and non-host resistance to the necrotrophic fungal pathogen Plectosphaerella cucumerina. Required for resistance to the non-adapted fungal pathogen Colletotrichum gloeosporioides. This Arabidopsis thaliana (Mouse-ear cress) protein is Cytochrome P450 81F2.